A 1049-amino-acid chain; its full sequence is Isoleucine--tRNA ligase (1049 aa).

Positions 48 to 58 match the 'HIGH' region motif; it reads PYTTGRIHLGT. Positions 596–600 match the 'KMSKS' region motif; the sequence is KMSKS. K599 is an ATP binding site.

The protein belongs to the class-I aminoacyl-tRNA synthetase family. IleS type 2 subfamily. In terms of assembly, monomer. The cofactor is Zn(2+).

The protein localises to the cytoplasm. It catalyses the reaction tRNA(Ile) + L-isoleucine + ATP = L-isoleucyl-tRNA(Ile) + AMP + diphosphate. Functionally, catalyzes the attachment of isoleucine to tRNA(Ile). As IleRS can inadvertently accommodate and process structurally similar amino acids such as valine, to avoid such errors it has two additional distinct tRNA(Ile)-dependent editing activities. One activity is designated as 'pretransfer' editing and involves the hydrolysis of activated Val-AMP. The other activity is designated 'posttransfer' editing and involves deacylation of mischarged Val-tRNA(Ile). This Methanothrix thermoacetophila (strain DSM 6194 / JCM 14653 / NBRC 101360 / PT) (Methanosaeta thermophila) protein is Isoleucine--tRNA ligase.